The sequence spans 317 residues: Protein PXR1 (317 aa).

One can recognise a G-patch domain in the interval 25–79; that stretch reads TTGYGHRIMSAQGWTPGAFLGAPGAAHSSCYTAASASHIRVVLKDDTLGLGARPR. The interval 152 to 268 is disordered; sequence EQANKDDSSD…PNKQSAQQST (117 aa). The segment covering 154–170 has biased composition (basic and acidic residues); the sequence is ANKDDSSDPKSRQETTQ. The span at 171-182 shows a compositional bias: basic residues; sequence KRPKKEKRKEKS. The segment covering 192–219 has biased composition (polar residues); that stretch reads RSISSKPERGTINSANQTSDDESTNIVP. Residues 224–236 are compositionally biased toward basic residues; the sequence is SRKKEKKKKSKKR.

It belongs to the PINX1 family.

The protein resides in the nucleus. Its subcellular location is the nucleolus. Its function is as follows. Involved in rRNA-processing at A0, A1 and A2 sites and negatively regulates telomerase. This is Protein PXR1 (PXR1) from Coccidioides immitis (strain RS) (Valley fever fungus).